The sequence spans 88 residues: Small ribosomal subunit protein uS17 (88 aa).

The protein belongs to the universal ribosomal protein uS17 family. Part of the 30S ribosomal subunit.

Its function is as follows. One of the primary rRNA binding proteins, it binds specifically to the 5'-end of 16S ribosomal RNA. This chain is Small ribosomal subunit protein uS17, found in Stutzerimonas stutzeri (strain A1501) (Pseudomonas stutzeri).